The following is a 214-amino-acid chain: MSLSTPLITDSTIQAATWLKNGQLLAYPTESVWGIGCDPFNKQAVMRLLDIKQRPIEKGMIVVTDSPSRITALLEGLTAVERQTVLDSWQADSINATAKQAHTWLLPIPKNLPITIPSWITGAHDSVAVRVIDHPLVKQLCAQMVSVSNPYGFVVSTSCNPSGKPPALSLIEAQSYFLGDNVNSDECVGYLKGETLGYQLPSQIGDALTGQVIR.

Residues 9–214 (TDSTIQAATW…GDALTGQVIR (206 aa)) enclose the YrdC-like domain.

The protein belongs to the SUA5 family. TsaC subfamily.

The protein localises to the cytoplasm. It catalyses the reaction L-threonine + hydrogencarbonate + ATP = L-threonylcarbamoyladenylate + diphosphate + H2O. In terms of biological role, required for the formation of a threonylcarbamoyl group on adenosine at position 37 (t(6)A37) in tRNAs that read codons beginning with adenine. Catalyzes the conversion of L-threonine, HCO(3)(-)/CO(2) and ATP to give threonylcarbamoyl-AMP (TC-AMP) as the acyladenylate intermediate, with the release of diphosphate. The protein is Threonylcarbamoyl-AMP synthase of Psychrobacter cryohalolentis (strain ATCC BAA-1226 / DSM 17306 / VKM B-2378 / K5).